Here is a 653-residue protein sequence, read N- to C-terminus: Probable sulfate transporter 3.4 (653 aa).

The Cytoplasmic segment spans residues 1-92 (MGHGTNRVED…QYDLKLLRSD (92 aa)). A helical transmembrane segment spans residues 93–113 (VISGLTIASLAIPQGISYAKL). Topologically, residues 114 to 115 (AN) are extracellular. A helical membrane pass occupies residues 116–136 (LPPIVGLYSSFVPPLIYAVLG). The Cytoplasmic portion of the chain corresponds to 137–140 (SSRH). A helical transmembrane segment spans residues 141-161 (LAVGPVSIASLVMGSMLSESV). Residues 162–167 (SPTQDS) lie on the Extracellular side of the membrane. The helical transmembrane segment at 168-188 (ILYLKLAFTSTFFAGVFQASL) threads the bilayer. The Cytoplasmic segment spans residues 189–194 (GLLRLG). A helical membrane pass occupies residues 195 to 215 (FMIDFLSKATLIGFTAGAAVI). At 216 to 247 (VSLQQLKGLLGIVHFTGKMQIVPVMSSVFNHR) the chain is on the extracellular side. The chain crosses the membrane as a helical span at residues 248-268 (SEWSWETIVMGIGFLSILLTT). Residues 269-279 (RHISMRKPKLF) are Cytoplasmic-facing. A helical transmembrane segment spans residues 280–300 (WISAASPLASVIISTLLVYLI). The Extracellular portion of the chain corresponds to 301–331 (RSKTHAISFIGHLPKGLNPPSLNMLYFSGAH). A helical transmembrane segment spans residues 332–352 (LALAIKTGIITGILSLTEGIA). Residues 353-370 (VGRTFASLKNYQVNGNKE) lie on the Cytoplasmic side of the membrane. A helical transmembrane segment spans residues 371–391 (MMAIGFMNMAGSCTSCYVTTG). At 392–407 (SFSRSAVNYNAGAKTA) the chain is on the extracellular side. The helical transmembrane segment at 408-428 (VSNIVMASAVLVTLLFLMPLF) threads the bilayer. Topologically, residues 429 to 433 (YYTPN) are cytoplasmic. Residues 434 to 454 (VILAAIILTAVIGLIDYQAAY) form a helical membrane-spanning segment. Topologically, residues 455–471 (KLWKVDKFDFFTCLCSF) are extracellular. Residues 472-492 (FGVLFVSVPLGLAIAVAVSVI) form a helical membrane-spanning segment. The Cytoplasmic portion of the chain corresponds to 493–653 (KILLHVTRPN…SSTWKANGQP (161 aa)). The 124-residue stretch at 520-643 (RYREASRIPG…LTVGEAVADL (124 aa)) folds into the STAS domain.

The protein belongs to the SLC26A/SulP transporter (TC 2.A.53) family.

The protein localises to the membrane. In terms of biological role, h(+)/sulfate cotransporter that may play a role in the regulation of sulfate assimilation. The polypeptide is Probable sulfate transporter 3.4 (SULTR3;4) (Arabidopsis thaliana (Mouse-ear cress)).